The chain runs to 466 residues: MRGAYSVITALLVVASSQIAAESDYQLQVYHHDVTVAGNAVVKSLPKRYLRGSQHVHDSNEERSVYSVLASMINEGVSKMPQAAEAVEKMPQAAEAVKKMPHAATAGKKVSRVTRTGKKMTSHGANARKGPLRADFVEKMPHAAEAKEEMQRANQHDLLKAIHQADEALEKSWHPSSDTAAIRYASHGISSNVILTLKEWRKNFRGMREMAVSSEHKDIIKPIHKAFVRLCGENMDPTTIEMSHIWNMMDWNVAASPATSHRQNLVSQAQRYVLIGLRSMKKDPAVWKEWNKLSKSLRFGVLDYLLNLHYQRWVRMYNIFKRHRPDKWDVPMNDKLSLDGNTDTNSALALQTHSNKQSLYPNEPSNAAWTSKGDRFVSSKRSRRTFNGNTDTASLPSKRSKVRSSKSFVPLSTESTTFGDHSVSTKTSRVSAVAPPKRPKAHNLDVLASAATALALKDSEFVMHES.

The signal sequence occupies residues 1–21 (MRGAYSVITALLVVASSQIAA). A RxLR-dEER motif is present at residues 48–63 (RYLRGSQHVHDSNEER). 2 disordered regions span residues 99–127 (KMPHAATAGKKVSRVTRTGKKMTSHGANA) and 384–405 (RTFNGNTDTASLPSKRSKVRSS). Basic residues predominate over residues 109 to 121 (KVSRVTRTGKKMT). The segment covering 385–395 (TFNGNTDTASL) has biased composition (polar residues).

This sequence belongs to the RxLR effector family.

The protein localises to the secreted. Its subcellular location is the host nucleus. Its function is as follows. Secreted effector that partially suppresses the host cell death induced by cell death-inducing proteins. This is Secreted RxLR effector protein 101 from Plasmopara viticola (Downy mildew of grapevine).